Here is a 392-residue protein sequence, read N- to C-terminus: Stilbene synthase 6 (392 aa).

55 to 58 (KFNR) serves as a coordination point for substrate. C164 is an active-site residue. Residues L267 and 305–307 (GGP) each bind substrate.

It belongs to the thiolase-like superfamily. Chalcone/stilbene synthases family. Homodimer.

The protein resides in the cytoplasm. The catalysed reaction is 4-coumaroyl-CoA + 3 malonyl-CoA + 3 H(+) = trans-resveratrol + 4 CO2 + 4 CoA. It participates in phytoalexin biosynthesis; 3,4',5-trihydroxystilbene biosynthesis; 3,4',5-trihydroxystilbene from trans-4-coumarate: step 2/2. Its function is as follows. Mediates resistance to pathogens which are sensitive to stilbenes. The chain is Stilbene synthase 6 (STS) from Vitis vinifera (Grape).